A 240-amino-acid chain; its full sequence is Dihydromonapterin reductase (240 aa).

The Proton acceptor role is filled by Tyr152.

Belongs to the short-chain dehydrogenases/reductases (SDR) family. FolM subfamily.

It catalyses the reaction (6S)-5,6,7,8-tetrahydrofolate + NADP(+) = 7,8-dihydrofolate + NADPH + H(+). The catalysed reaction is 7,8-dihydromonapterin + NADPH + H(+) = 5,6,7,8-tetrahydromonapterin + NADP(+). Catalyzes the reduction of dihydromonapterin to tetrahydromonapterin. Also has lower activity with dihydrofolate. In Escherichia coli O1:K1 / APEC, this protein is Dihydromonapterin reductase (folM).